We begin with the raw amino-acid sequence, 88 residues long: Small ribosomal subunit protein bS20 (88 aa).

Residues 1 to 23 form a disordered region; that stretch reads MANTSSAKKATRKIARRAAINKN.

It belongs to the bacterial ribosomal protein bS20 family.

Its function is as follows. Binds directly to 16S ribosomal RNA. This Mesorhizobium japonicum (strain LMG 29417 / CECT 9101 / MAFF 303099) (Mesorhizobium loti (strain MAFF 303099)) protein is Small ribosomal subunit protein bS20.